The following is a 569-amino-acid chain: MTAIESFDNIYLDLSKESGKCRFAETGFGWKPVGGGDTFTLDHNNIASAQWSRAAKGYEIKIVQRSKSGIIQLDGFQQEDYDRLAKVFKNWYSTVLESKEHALRGWNWGKAEFSKSELTFSVQNRPAFELPYSEIGNTNLAGRNEVAVEMALPESGANAQLGGARSKGSKAAAGRDQLVEMRFYIPGVTTRKEAEGEDAGSDAGNDEQEKNAATLFYETLIDKAEIGETAGDTIATFLDVLHLTPRGRFDIDMYEASFRLRGKTYDYKIQYEAIKKFMVLPKPDEVHYMLVMGLDPPLRQGQTRYPFVVMQFKKDEEVTIDLNLNEEELKSKYQDKLEPHYEEPLHQVVAKIFRGLGNRKISSPAKDFITHRNQYGIKCSIKASEGFLYCLEKAFMFVPKPATYIAYEQTQSVTFSRVSGAVSALSTFDITVLLKNGAGSSQFSNISREDLKALESFFKLKGLRVKNEIDEDANLLAAAMNQQMDDSEDEVAAKADRGSADEDEESVDEDFRTDSESDVAEEYDSAHESDGSGSDESNVDDDEQDDDDDDDDDDGEDEDERPKKKKKTG.

Positions 482–569 (QQMDDSEDEV…ERPKKKKKTG (88 aa)) are disordered. The segment covering 491–500 (VAAKADRGSA) has biased composition (basic and acidic residues). Positions 537–559 (SNVDDDEQDDDDDDDDDDGEDED) are enriched in acidic residues.

The protein belongs to the SSRP1 family. As to quaternary structure, forms a stable heterodimer with SPT16. The SPT16-POB3 dimer weakly associates with multiple molecules of NHP6 to form the FACT complex.

It is found in the nucleus. It localises to the chromosome. Component of the FACT complex, a general chromatin factor that acts to reorganize nucleosomes. The FACT complex is involved in multiple processes that require DNA as a template such as mRNA elongation, DNA replication and DNA repair. During transcription elongation the FACT complex acts as a histone chaperone that both destabilizes and restores nucleosomal structure. It facilitates the passage of RNA polymerase II and transcription by promoting the dissociation of one histone H2A-H2B dimer from the nucleosome, then subsequently promotes the reestablishment of the nucleosome following the passage of RNA polymerase II. The sequence is that of FACT complex subunit POB3 (POB3) from Gibberella zeae (strain ATCC MYA-4620 / CBS 123657 / FGSC 9075 / NRRL 31084 / PH-1) (Wheat head blight fungus).